The following is a 203-amino-acid chain: Urease accessory protein UreG (203 aa).

Position 11–18 (11–18) interacts with GTP; that stretch reads GPVGSGKT.

It belongs to the SIMIBI class G3E GTPase family. UreG subfamily. In terms of assembly, homodimer. UreD, UreF and UreG form a complex that acts as a GTP-hydrolysis-dependent molecular chaperone, activating the urease apoprotein by helping to assemble the nickel containing metallocenter of UreC. The UreE protein probably delivers the nickel.

It is found in the cytoplasm. In terms of biological role, facilitates the functional incorporation of the urease nickel metallocenter. This process requires GTP hydrolysis, probably effectuated by UreG. This Prochlorococcus marinus (strain MIT 9312) protein is Urease accessory protein UreG.